Consider the following 189-residue polypeptide: UPF0301 protein A1E_00140 (189 aa).

It belongs to the UPF0301 (AlgH) family.

The chain is UPF0301 protein A1E_00140 from Rickettsia canadensis (strain McKiel).